The chain runs to 345 residues: Phosphoribosylformylglycinamidine cyclo-ligase (345 aa).

This sequence belongs to the AIR synthase family.

It is found in the cytoplasm. The enzyme catalyses 2-formamido-N(1)-(5-O-phospho-beta-D-ribosyl)acetamidine + ATP = 5-amino-1-(5-phospho-beta-D-ribosyl)imidazole + ADP + phosphate + H(+). Its pathway is purine metabolism; IMP biosynthesis via de novo pathway; 5-amino-1-(5-phospho-D-ribosyl)imidazole from N(2)-formyl-N(1)-(5-phospho-D-ribosyl)glycinamide: step 2/2. This chain is Phosphoribosylformylglycinamidine cyclo-ligase, found in Cronobacter sakazakii (strain ATCC BAA-894) (Enterobacter sakazakii).